Reading from the N-terminus, the 787-residue chain is GPI ethanolamine phosphate transferase 2 (787 aa).

Asn-33, Asn-185, and Asn-397 each carry an N-linked (GlcNAc...) asparagine glycan. 3 consecutive transmembrane segments (helical) span residues 400–420 (FLTYGTTLMIIGTLIVTVWNF), 426–446 (YIEHVGTSVLLGISMFASSFI), and 455–475 (WITISVLLLMQISNGKKLVVL). Asn-485 is a glycosylation site (N-linked (GlcNAc...) asparagine). Transmembrane regions (helical) follow at residues 504–524 (HTSVLWWLNVVTFLSVGFPFL) and 536–556 (LLSVSFLALSSITYKICFAIV). The N-linked (GlcNAc...) asparagine glycan is linked to Asn-581. The helical transmembrane segment at 591-611 (LVPIARIFFQICGVSIIILLF) threads the bilayer. Asn-617 carries N-linked (GlcNAc...) asparagine glycosylation. Residues 629-651 (VIKFVLLLQTSSANIPLFLIFEI) form a helical membrane-spanning segment. Asn-669 is a glycosylation site (N-linked (GlcNAc...) asparagine). 4 helical membrane passes run 671–693 (TFFQFGGTNSIATVNLTNAYNGV), 699–719 (IYVVGVLMFLSNYAPSIYWAL), 740–760 (GTCLMIACIALRYHLFIWSVF), and 767–787 (YAAWSLYNVVMDFAITLLGVL).

The protein belongs to the PIGG/PIGN/PIGO family. PIGG subfamily.

The protein localises to the endoplasmic reticulum membrane. Its pathway is glycolipid biosynthesis; glycosylphosphatidylinositol-anchor biosynthesis. Functionally, ethanolamine phosphate transferase involved in glycosylphosphatidylinositol-anchor biosynthesis. Transfers ethanolamine phosphate to the GPI second mannose. The polypeptide is GPI ethanolamine phosphate transferase 2 (LAS21) (Kluyveromyces lactis (strain ATCC 8585 / CBS 2359 / DSM 70799 / NBRC 1267 / NRRL Y-1140 / WM37) (Yeast)).